A 331-amino-acid chain; its full sequence is MRLLVTGGAGFIGTNFVHSAVREHPDDAVTVLDALTYAGRRESLADVEDAIRLVQGDITDAELVSQLVAESDAVVHFAAESHVDNALDNPEPFLHTNVIGTFTILEAVRRHGVRLHHISTDEVYGDLELDDRARFTESTPYNPSSPYSATKAGADMLVRAWVRSYGVRATISNCSNNYGPYQHVEKFIPRQITNVLTGRRPKLYGAGANVRDWIHVDDHNSAVRRILDRGRIGRTYLISSEGERDNLTVLRTLLRLMDRDPDDFDHVTDRVGHDLRYAIDPSTLYDELCWAPKHTDFEEGLRTTIDWYRDNESWWRPLKDATEARYQERGQ.

Residues 11–12 (FI), 33–36 (DALT), 57–58 (DI), 77–81 (FAAES), and T96 contribute to the NAD(+) site. S81 lines the substrate pocket. T120 is a binding site for substrate. Catalysis depends on D121, which acts as the Proton donor. Catalysis depends on proton acceptor residues E122 and Y147. 147-151 (YSATK) contacts NAD(+). N176 contacts substrate. N177 lines the NAD(+) pocket. Substrate-binding positions include 186 to 191 (KFIPRQ), 202 to 204 (KLY), R211, N246, and 269 to 273 (DRVGH).

Belongs to the NAD(P)-dependent epimerase/dehydratase family. dTDP-glucose dehydratase subfamily. Homodimer. NAD(+) is required as a cofactor.

It catalyses the reaction dTDP-alpha-D-glucose = dTDP-4-dehydro-6-deoxy-alpha-D-glucose + H2O. It functions in the pathway carbohydrate biosynthesis; dTDP-L-rhamnose biosynthesis. Functionally, catalyzes the dehydration of dTDP-D-glucose to form dTDP-6-deoxy-D-xylo-4-hexulose via a three-step process involving oxidation, dehydration and reduction. Involved in the biosynthesis of the dTDP-L-rhamnose which is a component of the critical linker, D-N-acetylglucosamine-L-rhamnose disaccharide, which connects the galactan region of arabinogalactan to peptidoglycan via a phosphodiester linkage. This is dTDP-glucose 4,6-dehydratase (rmlB) from Mycobacterium tuberculosis (strain CDC 1551 / Oshkosh).